We begin with the raw amino-acid sequence, 242 residues long: Intraflagellar transport-associated protein (242 aa).

At Ser57 the chain carries Phosphoserine.

In terms of assembly, interacts with IFT122; the interaction associates IFTAP with IFT-A complex.

Its function is as follows. Seems to play a role in ciliary BBSome localization, maybe through interaction with IFT-A complex. The chain is Intraflagellar transport-associated protein (IFTAP) from Bos taurus (Bovine).